The chain runs to 539 residues: uncharacterized protein (539 aa).

ABC transporter domains are found at residues 9–276 (LEVK…EFKK) and 288–536 (IKLE…QEMF). ATP is bound by residues 41 to 48 (GKSGAGKS) and 325 to 332 (GTSGAGKT).

The protein belongs to the ABC transporter superfamily.

This is an uncharacterized protein from Methanocaldococcus jannaschii (strain ATCC 43067 / DSM 2661 / JAL-1 / JCM 10045 / NBRC 100440) (Methanococcus jannaschii).